The following is a 424-amino-acid chain: Putative polyketide beta-ketoacyl synthase 2 (424 aa).

The region spanning 13 to 416 is the Ketosynthase family 3 (KS3) domain; sequence SRRAVVTGLG…GSNSALVLRR (404 aa).

Belongs to the thiolase-like superfamily. Beta-ketoacyl-ACP synthases family.

In terms of biological role, involved in developmentally regulated synthesis of a compound biosynthetically related to polyketide antibiotics which is essential for spore color in Streptomyces coelicolor. The protein is Putative polyketide beta-ketoacyl synthase 2 of Streptomyces coelicolor (strain ATCC BAA-471 / A3(2) / M145).